The chain runs to 364 residues: NAD(P)H-quinone oxidoreductase subunit 1, chloroplastic (364 aa).

The next 6 membrane-spanning stretches (helical) occupy residues Ile-27–Ile-47, Phe-98–Phe-118, Ile-127–Met-147, Gly-255–Leu-275, Val-301–Val-321, and Leu-337–Thr-357.

The protein belongs to the complex I subunit 1 family. As to quaternary structure, NDH is composed of at least 16 different subunits, 5 of which are encoded in the nucleus.

It is found in the plastid. Its subcellular location is the chloroplast thylakoid membrane. The catalysed reaction is a plastoquinone + NADH + (n+1) H(+)(in) = a plastoquinol + NAD(+) + n H(+)(out). It carries out the reaction a plastoquinone + NADPH + (n+1) H(+)(in) = a plastoquinol + NADP(+) + n H(+)(out). Its function is as follows. NDH shuttles electrons from NAD(P)H:plastoquinone, via FMN and iron-sulfur (Fe-S) centers, to quinones in the photosynthetic chain and possibly in a chloroplast respiratory chain. The immediate electron acceptor for the enzyme in this species is believed to be plastoquinone. Couples the redox reaction to proton translocation, and thus conserves the redox energy in a proton gradient. This is NAD(P)H-quinone oxidoreductase subunit 1, chloroplastic from Illicium oligandrum (Star anise).